The following is a 374-amino-acid chain: 12-oxophytodienoate reductase 2 (374 aa).

M1 is subject to N-acetylmethionine. FMN is bound by residues 33-35 (PLT), A66, and Q108. H185 is a binding site for substrate. The active-site Proton donor is Y190. R237 provides a ligand contact to FMN. Substrate is bound at residue R277. FMN-binding positions include 305 to 307 (AGG) and 328 to 329 (GR).

The protein belongs to the NADH:flavin oxidoreductase/NADH oxidase family. The cofactor is FMN. As to expression, expressed at highest levels in roots and cotyledons, and at lower levels in leaves, shoots and flowers (sepals, petals, maturing siliques and developing pollen).

It localises to the cytoplasm. The enzyme catalyses (1S,2S)-OPC-8 + NADP(+) = (9S,13S,15Z)-12-oxophyto-10,15-dienoate + NADPH + H(+). It catalyses the reaction a 4,5-didehydrojasmonate + NADPH + H(+) = a jasmonate + NADP(+). It participates in lipid metabolism; oxylipin biosynthesis. In terms of biological role, specifically cleaves olefinic bonds in alpha,beta-unsaturated carbonyls and may be involved in detoxification or modification of these reactive compounds. May be involved in the biosynthesis or metabolism of oxylipin signaling molecules. In vitro, reduces 9R,13R-12-oxophytodienoic acid (9R,13R-OPDA) to 9R,13R-OPC-8:0, but only poorly 9S,13S-OPDA, the natural precursor of jasmonic acid (JA). Can detoxify the explosive 2,4,6-trinitrotoluene (TNT) in vitro and in vivo by catalyzing its nitroreduction to form hydroxylamino-dinitrotoluene (HADNT). Functions in an alternative and OPR3-independent pathway for JA biosynthesis. Catalyzes the NADPH-dependent reduction of 4,5-didehydrojasmonates to jasmonates. The protein is 12-oxophytodienoate reductase 2 of Arabidopsis thaliana (Mouse-ear cress).